Reading from the N-terminus, the 6486-residue chain is Tyrocidine synthase 3 (6486 aa).

The segment at 466–1038 (IFELIAEQAS…VAELARFLSR (573 aa)) is domain 1 (asparagine-activating). Carrier domains lie at 965–1040 (APQN…SRSE), 2002–2077 (APRN…AAAR), 3040–3115 (APTN…ATSG), 4075–4150 (AAQN…AESA), 5119–5194 (APRS…EETA), and 6162–6237 (APRN…THKR). An O-(pantetheine 4'-phosphoryl)serine mark is found at Ser1000, Ser2037, Ser3075, Ser4110, Ser5154, and Ser6197. The interval 1521–2070 (YEEYALTYRE…FESPTIAGLA (550 aa)) is domain 2 (glutamine-activating). The tract at residues 2536–3113 (NKTLQALFEE…IKALAQYVAT (578 aa)) is domain 3 (tyrosine-activating). The domain 4 (valine-activating) stretch occupies residues 3590-4149 (EHAAVVMDGQ…HELAAHIAES (560 aa)). The interval 4606 to 5203 (YPTDKTFQKL…AKGNVFSIEP (598 aa)) is domain 5 (ornithine-activating). Residues 5658-6245 (LHQLFEEQVD…KRFESRYGTA (588 aa)) are domain 6 (leucine-activating).

The protein belongs to the ATP-dependent AMP-binding enzyme family. In terms of assembly, large multienzyme complex of TycA, TycB and TycC. Pantetheine 4'-phosphate serves as cofactor.

It participates in antibiotic biosynthesis; tyrocidine biosynthesis. Functionally, incorporates six amino acids (for tyrocidine A, Asn, Gln, Tyr, Val, Orn, and Leu) in their L-configuration into the peptide product. This is Tyrocidine synthase 3 (tycC) from Brevibacillus parabrevis.